Reading from the N-terminus, the 1665-residue chain is MATDGASCEPNFSRAPEDVGATAEAAVATKEFDVDTLSKSELRMLLSVMEGELEARDLVIEALRARRKEVFIQERYGRFNLNDPFLALQRDYEAGAGEKEKKPVCTNPLSILEAVMAHCRKMQERMSTQLAAAESRQKKLEMEKLQLQALEQEHKKLATRLEEERGKNKHVVLMLVKECKQLSGKVIEEAQKLEEVMTKLEEEKKKTNELEEELSAEKRRSTEMEAQLEKQLSEFDIEREQLRAKLNREEAHTTDLKEEIDKMKKMIEQLKRGNDSKPSLSLPRKTKDRRLVSISVGTEGPVTRSVACQTDLVIESTDHVKKLPLTVPVKPSTGSPLVSAPAKGNVCPSVPLLRPGIDRQASHGDLIVSSVPAVPPPNANRIEENGPSIGSTPDLASSTPPLPSNAAPPTGQTSGIASQNYSQASSMHSLHSPCANASLHPGPNPRIQAARFRFQGNANDQDQNGNTTQSPPSRDVSPTSRDNLVAKQLARNTVTQALSRFTSPQASASPRPGAPPTGDIGTHPAVSRTSLKTPGLARVDRGNPPPIPPKKPGLSQAPSPPHPQLKAIMDSSRASNAGAKVDNKTVASPPASLPQGNRVINEENLPKSSSPQLPPKPSIDLTVAPAGCAVSALATSQVGARPAETPGPTQPACSDSSLVIPTTIAFRSSINPVSASASRPGASDSLLVTASGWSPSLTPLLMSGGPAPLAGRPTLLQQAAAQGNVTLLSMLLNEEGLDINYSCEDGHSALYSAAKNGHTDCVRLLLNAKAQIDAADKNGFTPLCAAAAQGHFECVELLIAYHANIDHAADGGQTPLYLACKNGNKECIKVLLEAGTDRSVKTRDGWTPVHAAVDTGNVDSLKLLMYHRAPTLGHSLNEEEPEPGAFDLDQGQEGSEGTAKPVVPTDLINHANREGWTAAHIAASKGFKNCLEILCRHGGLEPERKDKCNRTVHDVATDDCKHLLENLNALKIPLRISVGETQPGSYGCDDFECENTICALNIHKQTSWDDFSKAVSQALTNHFQAISSDGWWSLEDMTFNNTPEPSIGLSARSILSITLGNVPWSAGQCFTQAPWDFMRKNKAEQVTVLLSGPQEGCLNSVTYASMIPLQMLQNYLRLVEQYHNVIFHGPEGSLQDYIAHQLALCMKHRQMAAGFSCEIVRAEVDAGFSKEQLIDLFINSACLIPVKQSPVTKKIIIILENLEKSSLSELLGDFLAPLENRSTESPCTFQKGNGTSECYYFHENCFLMGTIAKTCLQGSDLLVQQHFRWVQLRWDGEPMHGLLQRFLRRKVVNKFRGQAPSPCDPVCKMVDWALAVWHQLNSCLARLGTPDALLGPKYFLSCPVVPGHAQVTVKWMSKLWNAIIAPKVQEAILSRASVKRQPGLRQTTAKKPPSQGQQAVVKAALSILLNKAVLHGCPLLRAELDQYITDFKGGSFPLSIVSSYNSCSKKKGENGAWRKVSTNPRKKSGRFSSPTWSKPDLGEEGTKNKTMSQPNCNRIASLSKQKSSENDPSSMLNLDQRLSLGSDDEADLVKELQSMCSSKSESDISKIADSRDDLRRFDSSENSPAFSAAINNLRMPVSQKEVSPVSSHQTTKRSTSTSKTELSVSRVKSFLPVPRSKVSQCSQNTKRSSSSSNTRQTELNNNSKEEIWNLCKNEQVQKPNK.

The stretch at 120-277 (RKMQERMSTQ…EQLKRGNDSK (158 aa)) forms a coiled coil. Disordered stretches follow at residues 203–222 (EKKK…RRST), 368–480 (VSSV…SPTS), and 500–620 (RFTS…PSID). Polar residues-rich tracts occupy residues 388–399 (SIGSTPDLASST) and 410–429 (TGQT…SMHS). Low complexity predominate over residues 455–469 (QGNANDQDQNGNTTQ). Positions 470 to 480 (SPPSRDVSPTS) are enriched in polar residues. Position 500 is an asymmetric dimethylarginine (Arg500). 5 ANK repeats span residues 711 to 741 (GRPT…DINY), 745 to 774 (DGHS…QIDA), 778 to 807 (NGFT…NIDH), 811 to 840 (GGQT…DRSV), and 844 to 873 (DGWT…PTLG). The interval 875-902 (SLNEEEPEPGAFDLDQGQEGSEGTAKPV) is disordered. One copy of the ANK 6 repeat lies at 914–944 (EGWTAAHIAASKGFKNCLEILCRHGGLEPER). The segment at 1447-1495 (CSKKKGENGAWRKVSTNPRKKSGRFSSPTWSKPDLGEEGTKNKTMSQPN) is disordered. Ser1526 bears the Phosphoserine mark. A disordered region spans residues 1575–1665 (NNLRMPVSQK…KNEQVQKPNK (91 aa)). Composition is skewed to low complexity over residues 1590–1604 (SSHQ…TSKT) and 1623–1641 (SQCS…TRQT). Residues 1656–1665 (KNEQVQKPNK) are compositionally biased toward polar residues.

In terms of assembly, interacts with CTTN/cortactin SH3 domain. Interacts with STRN, STRN4/zinedin and MOB4/phocein; this interactions mediate the association with the STRIPAK core complex and may regulate dendritic spine distribution of the STRIPAK complex in hippocampal neurons. Activation of glutamate receptors weakens the interaction with STRN and STRN4.

It is found in the cytoplasm. The protein resides in the cell cortex. The protein localises to the cell projection. It localises to the dendritic spine. Regulates the dendritic spine distribution of CTTN/cortactin in hippocampal neurons, and thus controls dendritic spinogenesis and dendritic spine maintenance. Associates with the striatin-interacting phosphatase and kinase (STRIPAK) core complex to regulate dendritic spine distribution of the STRIPAK complex in hippocampal neurons. This is Cortactin-binding protein 2 (CTTNBP2) from Dasypus novemcinctus (Nine-banded armadillo).